Reading from the N-terminus, the 526-residue chain is Probable polyol transporter 4 (526 aa).

Disordered stretches follow at residues 1-21 (MMKN…AVSV) and 28-47 (YQRM…AEAR). Residues 29-47 (QRMDSDAEESQNHREAEAR) are compositionally biased toward basic and acidic residues. A run of 12 helical transmembrane segments spans residues 63-83 (SLNN…VLFI), 92-112 (VQTE…SLAG), 125-145 (MALA…APSF), 153-173 (TLAG…IAEI), 180-200 (GFFT…GYVS), 215-235 (IMLA…CVIP), 300-320 (MLIV…DATV), 340-360 (AATV…TFLI), 371-391 (VSTI…TFLG), 395-415 (LGIT…SIGM), 437-457 (ALGA…FLSV), and 465-485 (GTFF…YVLV).

This sequence belongs to the major facilitator superfamily. Sugar transporter (TC 2.A.1.1) family.

Its subcellular location is the membrane. Plasma membrane sugar-proton symporter. This chain is Probable polyol transporter 4 (PLT4), found in Arabidopsis thaliana (Mouse-ear cress).